The following is an 86-amino-acid chain: Large ribosomal subunit protein uL23 (86 aa).

This sequence belongs to the universal ribosomal protein uL23 family. In terms of assembly, part of the 50S ribosomal subunit. Contacts protein L29.

Its function is as follows. Binds to 23S rRNA. One of the proteins that surrounds the polypeptide exit tunnel on the outside of the ribosome. In Methanosphaera stadtmanae (strain ATCC 43021 / DSM 3091 / JCM 11832 / MCB-3), this protein is Large ribosomal subunit protein uL23.